The chain runs to 525 residues: Peptide chain release factor 3 (525 aa).

The tr-type G domain maps to alanine 9–glutamine 276. Residues serine 18 to threonine 25, aspartate 86 to histidine 90, and asparagine 140 to aspartate 143 each bind GTP.

The protein belongs to the TRAFAC class translation factor GTPase superfamily. Classic translation factor GTPase family. PrfC subfamily.

It localises to the cytoplasm. Increases the formation of ribosomal termination complexes and stimulates activities of RF-1 and RF-2. It binds guanine nucleotides and has strong preference for UGA stop codons. It may interact directly with the ribosome. The stimulation of RF-1 and RF-2 is significantly reduced by GTP and GDP, but not by GMP. The sequence is that of Peptide chain release factor 3 from Francisella tularensis subsp. holarctica (strain FTNF002-00 / FTA).